A 200-amino-acid polypeptide reads, in one-letter code: Small ribosomal subunit protein uS4 (200 aa).

Residues 94-157 enclose the S4 RNA-binding domain; the sequence is SRLDNLVFRA…QTSPQVKDAV (64 aa).

Belongs to the universal ribosomal protein uS4 family. In terms of assembly, part of the 30S ribosomal subunit. Contacts protein S5. The interaction surface between S4 and S5 is involved in control of translational fidelity.

Its function is as follows. One of the primary rRNA binding proteins, it binds directly to 16S rRNA where it nucleates assembly of the body of the 30S subunit. Functionally, with S5 and S12 plays an important role in translational accuracy. The chain is Small ribosomal subunit protein uS4 from Metamycoplasma arthritidis (strain 158L3-1) (Mycoplasma arthritidis).